Here is a 527-residue protein sequence, read N- to C-terminus: Probable malate:quinone oxidoreductase 2 (527 aa).

This sequence belongs to the MQO family. Requires FAD as cofactor.

The catalysed reaction is (S)-malate + a quinone = a quinol + oxaloacetate. It functions in the pathway carbohydrate metabolism; tricarboxylic acid cycle; oxaloacetate from (S)-malate (quinone route): step 1/1. This Pseudomonas putida (strain ATCC 47054 / DSM 6125 / CFBP 8728 / NCIMB 11950 / KT2440) protein is Probable malate:quinone oxidoreductase 2.